Reading from the N-terminus, the 161-residue chain is Cyclic pyranopterin monophosphate synthase (161 aa).

Substrate contacts are provided by residues 75 to 77 (LCH) and 113 to 114 (ME). Residue aspartate 128 is part of the active site.

This sequence belongs to the MoaC family. As to quaternary structure, homohexamer; trimer of dimers.

The catalysed reaction is (8S)-3',8-cyclo-7,8-dihydroguanosine 5'-triphosphate = cyclic pyranopterin phosphate + diphosphate. The protein operates within cofactor biosynthesis; molybdopterin biosynthesis. Its function is as follows. Catalyzes the conversion of (8S)-3',8-cyclo-7,8-dihydroguanosine 5'-triphosphate to cyclic pyranopterin monophosphate (cPMP). This is Cyclic pyranopterin monophosphate synthase from Salmonella dublin (strain CT_02021853).